An 87-amino-acid chain; its full sequence is Transcription factor ILI4 (87 aa).

A bHLH domain is found at 1–54; sequence MSSRRSSRSSVSEEEINELISKLQSLLPSSRRRGANQASTTKLLKETCSYIKSL.

This sequence belongs to the bHLH protein family. In terms of assembly, interacts with LO9-177. As to expression, expressed in phloem of leaf blades and sheaths, lamina joints, filaments before anthesis, vasculare bundles of the ovule, lemma and palea, and embryos.

Its subcellular location is the cytoplasm. Functionally, atypical and probable non DNA-binding bHLH transcription factor that acts as a positive regulator of brassinosteroid (BR) response. Controls lamina inclination by participating in two BR signaling pathways involving BRI1 and RGA1. Involved in the RLI1-dependent modulation of leaf inclination by promoting lamina joint cell elongation, especially in response to phosphate (Pi) availability. In Oryza sativa subsp. japonica (Rice), this protein is Transcription factor ILI4 (ILI4).